A 301-amino-acid chain; its full sequence is Prohibitin-2 (301 aa).

2 necessary for transcriptional repression regions span residues Met-19–Ala-49 and Ala-150–Asp-174. The stretch at Arg-191–Met-237 forms a coiled coil.

It belongs to the prohibitin family. In terms of assembly, the mitochondrial prohibitin complex consists of two subunits (PHB1 and PHB2), assembled into a membrane-associated ring-shaped supercomplex of approximately 1 mDa.

It localises to the mitochondrion inner membrane. The protein localises to the cytoplasm. It is found in the nucleus. Its subcellular location is the cell membrane. Protein with pleiotropic attributes mediated in a cell-compartment- and tissue-specific manner, which include the plasma membrane-associated cell signaling functions, mitochondrial chaperone, and transcriptional co-regulator of transcription factors and sex steroid hormones in the nucleus. In terms of biological role, in the mitochondria, together with PHB, forms large ring complexes (prohibitin complexes) in the inner mitochondrial membrane (IMM) and functions as a chaperone protein that stabilizes mitochondrial respiratory enzymes and maintains mitochondrial integrity in the IMM, which is required for mitochondrial morphogenesis, neuronal survival, and normal lifespan. Its function is as follows. In the nucleus, serves as transcriptional co-regulator. The polypeptide is Prohibitin-2 (phb2) (Xenopus tropicalis (Western clawed frog)).